Consider the following 294-residue polypeptide: Acetyl-coenzyme A carboxylase carboxyl transferase subunit beta (294 aa).

Residues 30–294 (IMTKCPECKK…PEVGGEADGE (265 aa)) enclose the CoA carboxyltransferase N-terminal domain. Cysteine 34, cysteine 37, cysteine 53, and cysteine 56 together coordinate Zn(2+). A C4-type zinc finger spans residues 34-56 (CPECKKIMYTKELQKNLMVCNYC).

Belongs to the AccD/PCCB family. As to quaternary structure, acetyl-CoA carboxylase is a heterohexamer composed of biotin carboxyl carrier protein (AccB), biotin carboxylase (AccC) and two subunits each of ACCase subunit alpha (AccA) and ACCase subunit beta (AccD). Zn(2+) is required as a cofactor.

The protein localises to the cytoplasm. The enzyme catalyses N(6)-carboxybiotinyl-L-lysyl-[protein] + acetyl-CoA = N(6)-biotinyl-L-lysyl-[protein] + malonyl-CoA. The protein operates within lipid metabolism; malonyl-CoA biosynthesis; malonyl-CoA from acetyl-CoA: step 1/1. Component of the acetyl coenzyme A carboxylase (ACC) complex. Biotin carboxylase (BC) catalyzes the carboxylation of biotin on its carrier protein (BCCP) and then the CO(2) group is transferred by the transcarboxylase to acetyl-CoA to form malonyl-CoA. The polypeptide is Acetyl-coenzyme A carboxylase carboxyl transferase subunit beta (Listeria monocytogenes serotype 4b (strain F2365)).